A 459-amino-acid polypeptide reads, in one-letter code: Chromosomal replication initiator protein DnaA (459 aa).

Positions 1–90 (MAVSLWQQCI…RPASKPAAPA (90 aa)) are domain I, interacts with DnaA modulators. A disordered region spans residues 75–124 (RFDIGSRPASKPAAPAASTKSPVAPAAKSPSKPSFNSNEPAATANHRSNM). Residues 80–108 (SRPASKPAAPAASTKSPVAPAAKSPSKPS) show a composition bias toward low complexity. The segment at 91 to 122 (ASTKSPVAPAAKSPSKPSFNSNEPAATANHRS) is domain II. Residues 109–124 (FNSNEPAATANHRSNM) are compositionally biased toward polar residues. The interval 123 to 339 (NMNPTYQFDN…GALNRVIANA (217 aa)) is domain III, AAA+ region. ATP contacts are provided by Gly167, Gly169, Lys170, and Thr171. The tract at residues 340–459 (NFTGRPITID…YANLIRTLSS (120 aa)) is domain IV, binds dsDNA.

Belongs to the DnaA family. As to quaternary structure, oligomerizes as a right-handed, spiral filament on DNA at oriC.

The protein localises to the cytoplasm. Its function is as follows. Plays an essential role in the initiation and regulation of chromosomal replication. ATP-DnaA binds to the origin of replication (oriC) to initiate formation of the DNA replication initiation complex once per cell cycle. Binds the DnaA box (a 9 base pair repeat at the origin) and separates the double-stranded (ds)DNA. Forms a right-handed helical filament on oriC DNA; dsDNA binds to the exterior of the filament while single-stranded (ss)DNA is stabiized in the filament's interior. The ATP-DnaA-oriC complex binds and stabilizes one strand of the AT-rich DNA unwinding element (DUE), permitting loading of DNA polymerase. After initiation quickly degrades to an ADP-DnaA complex that is not apt for DNA replication. Binds acidic phospholipids. The sequence is that of Chromosomal replication initiator protein DnaA from Shewanella loihica (strain ATCC BAA-1088 / PV-4).